The primary structure comprises 154 residues: Large ribosomal subunit protein uL13 (154 aa).

The protein belongs to the universal ribosomal protein uL13 family. In terms of assembly, part of the 50S ribosomal subunit.

In terms of biological role, this protein is one of the early assembly proteins of the 50S ribosomal subunit, although it is not seen to bind rRNA by itself. It is important during the early stages of 50S assembly. This Bartonella quintana (strain Toulouse) (Rochalimaea quintana) protein is Large ribosomal subunit protein uL13.